Consider the following 93-residue polypeptide: M-zodatoxin-Lt5a (93 aa).

Positions 1 to 22 (MKYCVVILALLVALVCITESRS) are cleaved as a signal peptide. A propeptide spanning residues 23 to 64 (TETGYAVAETLEDNDLDELQAYLEEIAEASEMEDFSNIEEAR) is cleaved from the precursor. A Processing quadruplet motif motif is present at residues 61–64 (EEAR). Leucine 92 is subject to Leucine amide.

Cleavage of the propeptide depends on the processing quadruplet motif (XXXR, with at least one of X being E). Expressed by the venom gland.

Its subcellular location is the secreted. In terms of biological role, has antimicrobial activity against. Gram-positive bacteria (A.globiformis VKM Ac-1112 (MIC=1.1 uM), and B.subtilis VKM B-501 (MIC=0.6 uM)), Gram-negative bacteria (E.coli DH5-alpha (MIC=0.6 uM), E.coli MH1 (MIC=0.6 uM), and P.aeruginosa PAO1 (MIC=18 uM)), and yeasts (P.pastoris GS115 (MIC&gt;37 uM), and S.cerevisiae Y190 (MIC&gt;37 uM)). Also has a moderate hemolytic activity against rabbit erythrocytes. Causes paralysis, but is not lethal when injected into insect (M.domestica) larvae. The chain is M-zodatoxin-Lt5a from Lachesana tarabaevi (Spider).